Consider the following 763-residue polypeptide: Endothelin-converting enzyme 2 (763 aa).

At 1-60 (MNVALHELGGGGSMVEYKRAKLRDEESPEITVEGRATRDSLEVGFQKRTRQLFGSHTQLE) the chain is on the cytoplasmic side. At S27 the chain carries Phosphoserine. A helical; Signal-anchor for type II membrane protein transmembrane segment spans residues 61-81 (LVLAGLILVLAALLLGCLVAL). The Lumenal segment spans residues 82–763 (WVHRDPAHST…MNPGQLCEVW (682 aa)). The Peptidase M13 domain maps to 91 to 763 (TCVTEACIRV…MNPGQLCEVW (673 aa)). Cystine bridges form between C92–C97, C115–C748, C123–C708, C179–C428, and C637–C760. N-linked (GlcNAc...) asparagine glycans are attached at residues N159, N163, N204, N264, N309, N376, and N532. A Zn(2+)-binding site is contributed by H600. The active site involves E601. H604 serves as a coordination point for Zn(2+). N-linked (GlcNAc...) asparagine glycosylation is found at N625 and N633. A Zn(2+)-binding site is contributed by E660. D664 (proton donor) is an active-site residue.

It belongs to the peptidase M13 family. Requires Zn(2+) as cofactor.

Its subcellular location is the golgi apparatus membrane. It localises to the cytoplasmic vesicle. The protein localises to the secretory vesicle membrane. The enzyme catalyses Hydrolysis of the 21-Trp-|-Val-22 bond in big endothelin to form endothelin 1.. Its function is as follows. Converts big endothelin-1 to endothelin-1. Also involved in the processing of various neuroendocrine peptides, including neurotensin, angiotensin I, substance P, proenkephalin-derived peptides, and prodynorphin-derived peptides. May play a role in amyloid-beta processing. This chain is Endothelin-converting enzyme 2, found in Mus musculus (Mouse).